A 334-amino-acid chain; its full sequence is Thioredoxin reductase aclT (334 aa).

Residues Gly-16–Ala-19, Asn-38–Arg-43, Ile-93, Ala-122, Asp-294, and Thr-302–Leu-303 each bind FAD.

This sequence belongs to the class-II pyridine nucleotide-disulfide oxidoreductase family. As to quaternary structure, homodimer. The cofactor is FAD.

Its pathway is mycotoxin biosynthesis. In terms of biological role, thioredoxin reductase; part of the gene cluster that mediates the biosynthesis of aspirochlorine (or antibiotic A30641), an unusual halogenated spiro compound with distinctive antifungal properties due to selective inhibition of protein biosynthesis, and which is also active against bacteria, viruses, and murine tumor cells. The non-ribosomal peptide synthetase (NRPS) aclP is responsible the formation of the diketopiperazine (DKP) core from the condensation of 2 phenylalanine residues. One Phe residue is tailored into chlorotyrosine by hydroxylation and chlorination, whereas the second Phe undergoes an unprecedented C-C bond cleavage to be converted into glycine. After formation of the DKP, sulfur is incorporated into the DKP by conjugation with glutathione by aclG, followed by its stepwise degradation to the thiol by aclI, aclJ and aclK, and the dithiol oxidation by aclT. In addition, oxygenases (aclB, aclC, aclL and aclO) and O-methyltransferases (aclM and aclU) act as tailoring enzymes to produce the intermediate dechloroaspirochlorine. Ultimately, chlorination of dechloroaspirochlorine by the halogenase aclH is the last step in the aspirochlorine pathway. This chain is Thioredoxin reductase aclT, found in Aspergillus oryzae (strain ATCC 42149 / RIB 40) (Yellow koji mold).